We begin with the raw amino-acid sequence, 547 residues long: Chaperonin GroEL (547 aa).

ATP is bound by residues 30 to 33 (TLGP), Lys-51, 87 to 91 (DGTTT), Gly-415, and Asp-496. Positions 527–547 (SDKAEPMPMRGGMGGMGGMDF) are disordered. Positions 537 to 547 (GGMGGMGGMDF) are enriched in gly residues.

The protein belongs to the chaperonin (HSP60) family. As to quaternary structure, forms a cylinder of 14 subunits composed of two heptameric rings stacked back-to-back. Interacts with the co-chaperonin GroES.

It is found in the cytoplasm. The enzyme catalyses ATP + H2O + a folded polypeptide = ADP + phosphate + an unfolded polypeptide.. Functionally, together with its co-chaperonin GroES, plays an essential role in assisting protein folding. The GroEL-GroES system forms a nano-cage that allows encapsulation of the non-native substrate proteins and provides a physical environment optimized to promote and accelerate protein folding. This chain is Chaperonin GroEL, found in Rickettsia africae (strain ESF-5).